We begin with the raw amino-acid sequence, 354 residues long: UDP-3-O-acylglucosamine N-acyltransferase (354 aa).

Histidine 247 (proton acceptor) is an active-site residue.

Belongs to the transferase hexapeptide repeat family. LpxD subfamily. In terms of assembly, homotrimer.

It catalyses the reaction a UDP-3-O-[(3R)-3-hydroxyacyl]-alpha-D-glucosamine + a (3R)-hydroxyacyl-[ACP] = a UDP-2-N,3-O-bis[(3R)-3-hydroxyacyl]-alpha-D-glucosamine + holo-[ACP] + H(+). It participates in bacterial outer membrane biogenesis; LPS lipid A biosynthesis. In terms of biological role, catalyzes the N-acylation of UDP-3-O-acylglucosamine using 3-hydroxyacyl-ACP as the acyl donor. Is involved in the biosynthesis of lipid A, a phosphorylated glycolipid that anchors the lipopolysaccharide to the outer membrane of the cell. This chain is UDP-3-O-acylglucosamine N-acyltransferase, found in Chlamydia trachomatis serovar L2b (strain UCH-1/proctitis).